A 396-amino-acid chain; its full sequence is Protein TOC75-4, chloroplastic (396 aa).

The Chloroplast intermembrane portion of the chain corresponds to 1-23 (MEAVKEAVRKIKSLVIPHADEKD). Residues 24 to 32 (NGIVFEIKL) form a beta stranded membrane-spanning segment. The Cytoplasmic segment spans residues 33–87 (NETDQRVEKWGLDPSLDFFEVTGNCNLGRPNSEGSNQSLMGSVTIRNIFNPKLDD). A beta stranded membrane pass occupies residues 88-96 (LLSKIEYVR). Residues 97–140 (FLEAVKKPRNRTFKTSFFNSRKLSPVFTGGPGYEDLVPPMFVGR) are Chloroplast intermembrane-facing. Residues 141–148 (DCLKATIT) traverse the membrane as a beta stranded segment. Over 149 to 156 (ENLTRQRE) the chain is Cytoplasmic. Residues 157–164 (LTYGVMFE) traverse the membrane as a beta stranded segment. Over 165–271 (EIITRDENRR…VEEGSDKPQP (107 aa)) the chain is Chloroplast intermembrane. Residues 272-280 (PVLVLHGRY) traverse the membrane as a beta stranded segment. Topologically, residues 281–292 (GGCIGDLPSYDV) are cytoplasmic. Residues 293-301 (FALGGPNSV) traverse the membrane as a beta stranded segment. Topologically, residues 302–363 (RGYSMGELGA…LYRKMGHGSS (62 aa)) are chloroplast intermembrane. Residues 364 to 370 (YGLGVKL) form a beta stranded membrane-spanning segment. The Cytoplasmic portion of the chain corresponds to 371–384 (GMVRAEYTVRHNRG). A beta stranded membrane pass occupies residues 385-392 (TGALFLRF). Residues 393–396 (GERY) are Chloroplast intermembrane-facing.

It belongs to the TOC75 family. Part of the TOC core complex that includes a protein for the specific recognition of transit peptides surrounded by a ring composed of four proteins forming translocation channels, and four to five GTP-binding proteins providing energy. This core complex can interact with components of the TIC complex to form a larger import complex. Chloroplastic protein precursors also interacts with these complexes. Expressed ubiquitously at low levels.

The protein localises to the plastid. It is found in the chloroplast outer membrane. Mediates the insertion of proteins targeted to the outer membrane of chloroplasts. Required for the import of protein precursors into chloroplasts. Forms the voltage-dependent preprotein translocation channels (hydrophilic beta barrel) of the TOC complex in the chloroplastic outer membrane. Required for etioplast formation and/or etioplast-chloroplast transition during deetiolation. This is Protein TOC75-4, chloroplastic (TOC75-4) from Arabidopsis thaliana (Mouse-ear cress).